The chain runs to 138 residues: Type II secretion system protein I (138 aa).

A propeptide spans 1 to 6 (MKHQRG) (leader sequence). An N-methyltyrosine modification is found at Tyr-7. Residues 7 to 29 (YSLIEVIVAFALLALALTLLLGS) form a helical membrane-spanning segment.

It belongs to the GSP I family. As to quaternary structure, type II secretion is composed of four main components: the outer membrane complex, the inner membrane complex, the cytoplasmic secretion ATPase and the periplasm-spanning pseudopilus. Interacts with core component XpsG. Post-translationally, cleaved by prepilin peptidase. In terms of processing, methylated by prepilin peptidase at the amino group of the N-terminal tyrosine once the leader sequence is cleaved by prepilin peptidase.

Its subcellular location is the cell inner membrane. Component of the type II secretion system required for the energy-dependent secretion of extracellular factors such as proteases and toxins from the periplasm. Part of the pseudopilus tip complex that is critical for the recognition and binding of secretion substrates. The sequence is that of Type II secretion system protein I (xpsI) from Xanthomonas campestris pv. campestris (strain ATCC 33913 / DSM 3586 / NCPPB 528 / LMG 568 / P 25).